A 77-amino-acid polypeptide reads, in one-letter code: Conotoxin CaHr91 (77 aa).

An N-terminal signal peptide occupies residues 1 to 19 (MKLTCALIITVLFLSITAD). Positions 20-43 (DSRGKQGYRALKSIAGMLNSKTVR) are excised as a propeptide. 3 cysteine pairs are disulfide-bonded: Cys45–Cys60, Cys52–Cys65, and Cys59–Cys74.

The protein belongs to the conotoxin O1 superfamily. Expressed by the venom duct.

Its subcellular location is the secreted. The chain is Conotoxin CaHr91 from Conus capitaneus (Captain cone).